A 101-amino-acid polypeptide reads, in one-letter code: MAKLALINREQKRADLVKKYAGKRAELKAIIDDQSKSEEERYEARLKLQALPRNSAPTRQRNRCTLTGRPRGTFRKFGLGRIKLREIAMRGEIPGMTKASW.

This sequence belongs to the universal ribosomal protein uS14 family. As to quaternary structure, part of the 30S ribosomal subunit. Contacts proteins S3 and S10.

Binds 16S rRNA, required for the assembly of 30S particles and may also be responsible for determining the conformation of the 16S rRNA at the A site. The protein is Small ribosomal subunit protein uS14 of Janthinobacterium sp. (strain Marseille) (Minibacterium massiliensis).